We begin with the raw amino-acid sequence, 339 residues long: Malate/(S)-sulfolactate dehydrogenase (339 aa).

It belongs to the LDH2/MDH2 oxidoreductase family. Homodimer.

It localises to the cytoplasm. The catalysed reaction is (S)-malate + NAD(+) = oxaloacetate + NADH + H(+). The enzyme catalyses (S)-malate + NADP(+) = oxaloacetate + NADPH + H(+). It carries out the reaction (2S)-3-sulfolactate + NAD(+) = 3-sulfopyruvate + NADH + H(+). Its function is as follows. Acts on oxaloacetate, sulfopyruvate but not on pyruvate. Has a higher selectivity for the coenzyme NADH than for NADPH. This Methanothermus fervidus (strain ATCC 43054 / DSM 2088 / JCM 10308 / V24 S) protein is Malate/(S)-sulfolactate dehydrogenase (mdh).